The following is a 472-amino-acid chain: MTERAQSPTAADCRPYEVNRAMYPQAAGLDGLGGASLQFAHGMLQDPSLIFNKAHFNGITPATAQTFFPFSGDFKTNDLQGGDFTQPKHWYPFAAPEFTGQVAGATAATQPANISPPIGETREQIKMPSEVKTEKDVEEYGNEENKPPSQYHLTAGTSSIPTGVNYYTPWNPNFWPGLSQITAQANISQAPPTPSASSPSLSPSPPGNGFGSPGFFSGGTAQNIPSAQAQSAPRSSGSSSGGCSNSEEEETLTTEDLEQFAKELKHKRITLGFTQADVGLALGNLYGKMFSQTTICRFEALQLSFKNMCKLKPLLQRWLNEAENSENPQDMYKIERVFVDTRKRKRRTSLEGTVRSALESYFVKCPKPNTLEITHISDDLGLERDVVRVWFCNRRQKGKRLALPFDDECVEAQYYEQSPPPPPHMGGTVLPGQGYPGPAHPGGAPALYMPSLHRPDVFKNGFHPGLVGHLNS.

Disordered regions lie at residues 127–154 (MPSEVKTEKDVEEYGNEENKPPSQYHLT) and 187–255 (ISQA…LTTE). Residues 220–234 (TAQNIPSAQAQSAPR) are compositionally biased toward polar residues. Low complexity predominate over residues 235 to 245 (SSGSSSGGCSN). Residues 246–255 (SEEEETLTTE) show a composition bias toward acidic residues. The POU-specific domain occupies 249–323 (EETLTTEDLE…LLQRWLNEAE (75 aa)). Residues 343 to 402 (KRKRRTSLEGTVRSALESYFVKCPKPNTLEITHISDDLGLERDVVRVWFCNRRQKGKRLA) constitute a DNA-binding region (homeobox).

It belongs to the POU transcription factor family. Class-7 subfamily.

It is found in the nucleus. Its function is as follows. Involved in early development of embryos, especially in the process of gastrulation. May play an important role in establishing and specifying rhombomeric segments. Seems to be required to maintain the cells in a highly undifferentiated state. In contrast to POU2, T-POU2 lacks DNA-binding activity because of its incomplete pou domain structure. Overexpression of POU2 does not have any effect on development, whereas overexpression of t-POU2 causes developmental retardation or arrest before gastrulation. The chain is POU domain, class 5, transcription factor 1 (pou5f1) from Danio rerio (Zebrafish).